The chain runs to 737 residues: O-GlcNAcase BT_4395 (737 aa).

Residues 1–21 (MKNNKIYLLGACLLCAVTTFA) form the signal peptide. The interval 148–433 (VRYRGVVEGF…WKDAIRTILP (286 aa)) is catalytic domain. The region spanning 149–416 (RYRGVVEGFY…SVASYAWNPA (268 aa)) is the GH84 domain. Positions 156, 187, and 263 each coordinate a protein. Asp-264 acts as the Proton donor in catalysis. Residues Tyr-303, 358–360 (WWN), Asp-365, and Asn-393 contribute to the a protein site.

It belongs to the glycosyl hydrolase 84 family. In terms of assembly, homodimer.

The catalysed reaction is 3-O-(N-acetyl-beta-D-glucosaminyl)-L-seryl-[protein] + H2O = N-acetyl-D-glucosamine + L-seryl-[protein]. The enzyme catalyses 3-O-(N-acetyl-beta-D-glucosaminyl)-L-threonyl-[protein] + H2O = L-threonyl-[protein] + N-acetyl-D-glucosamine. With respect to regulation, inhibited by 1,2-dideoxy-2'-methyl-alpha-D-glucopyranoso-[2,1-d]-delta 2'-thiazoline (NAG-thiazoline) and O-(2-acetamido-2-deoxy-D-glucopyranosylidene)amino-N-phenyl-carbamate (PUGNAc). Not inhibited by Streptozotocin. Functionally, can hydrolyze the glycosidic link of O-GlcNAcylated proteins. Can use p-nitrophenyl-beta-GlcNAc and 4-methylumbelliferone-GlcNAc as substrates (in vitro). This is O-GlcNAcase BT_4395 from Bacteroides thetaiotaomicron (strain ATCC 29148 / DSM 2079 / JCM 5827 / CCUG 10774 / NCTC 10582 / VPI-5482 / E50).